Here is a 208-residue protein sequence, read N- to C-terminus: Myosin light chain 6B (208 aa).

The disordered stretch occupies residues 1-51 (MPPKKDVPVKKPAGPSISKPAAKPAAAGAPPAKTKAEPAVPQAPQKTQEPP). Low complexity predominate over residues 10–40 (KKPAGPSISKPAAKPAAAGAPPAKTKAEPAV). EF-hand domains lie at 64 to 99 (DQLE…LGQN), 141 to 176 (GTYE…LGEK), and 176 to 208 (KMTE…ILSV).

In terms of assembly, myosin is a hexamer of 2 heavy chains and 4 light chains.

Its function is as follows. Regulatory light chain of myosin. Does not bind calcium. In Homo sapiens (Human), this protein is Myosin light chain 6B (MYL6B).